Reading from the N-terminus, the 253-residue chain is 5'-nucleotidase SurE (253 aa).

Residues Asp-8, Asp-9, Ser-40, and Asn-97 each contribute to the a divalent metal cation site.

Belongs to the SurE nucleotidase family. A divalent metal cation serves as cofactor.

It localises to the cytoplasm. It carries out the reaction a ribonucleoside 5'-phosphate + H2O = a ribonucleoside + phosphate. In terms of biological role, nucleotidase that shows phosphatase activity on nucleoside 5'-monophosphates. This chain is 5'-nucleotidase SurE, found in Desulforamulus reducens (strain ATCC BAA-1160 / DSM 100696 / MI-1) (Desulfotomaculum reducens).